The chain runs to 380 residues: Zinc metalloproteinase-like protein nas-21 (380 aa).

A signal peptide spans 1–24 (MNYFITFFFMHIAVLNFYFRFSNG). Residues 46–234 (QALRMDNEPR…LMINEYYQCS (189 aa)) form the Peptidase M12A domain. An N-linked (GlcNAc...) asparagine glycan is attached at asparagine 87. 2 disulfides stabilise this stretch: cysteine 90/cysteine 233 and cysteine 110/cysteine 130. Glutamate 138 is an active-site residue. Asparagine 253, asparagine 269, asparagine 283, and asparagine 304 each carry an N-linked (GlcNAc...) asparagine glycan.

It is found in the secreted. Functionally, may lack metalloprotease activity. This chain is Zinc metalloproteinase-like protein nas-21 (nas-21), found in Caenorhabditis elegans.